The sequence spans 220 residues: uncharacterized protein (220 aa).

This is an uncharacterized protein from Sinorhizobium fredii (strain NBRC 101917 / NGR234).